The following is an 88-amino-acid chain: uncharacterized protein (88 aa).

Residues 1–54 (AVDAYDDDDNLKNEEGDYYNESDDGYSGDEEEEEKQEEDEQDDDDLQFDDGVPE) form a disordered region. Positions 16–53 (GDYYNESDDGYSGDEEEEEKQEEDEQDDDDLQFDDGVP) are enriched in acidic residues.

Predominantly in developing fruit.

This is an uncharacterized protein from Fragaria ananassa (Strawberry).